We begin with the raw amino-acid sequence, 168 residues long: Calcium-binding protein 2 (168 aa).

EF-hand domains follow at residues 13–48 (GMEKDLESLFKKYDSDRNGKITYIEIVETLRKAGKK), 48–83 (KNPERIADLLFRDDTDKNGELTIEEAKLRIVRMNDE), 88–123 (VLNWDVEKFINDNDKDGDRKITRDEVLQRFTEQGAE), and 124–159 (DPELITDSIFRQMDLDRDGVITCDEIKEFNRKKKFS). Positions 26, 28, 30, 32, 37, 61, 63, 65, 67, 72, 101, 103, 105, 107, 112, 137, 139, 141, and 148 each coordinate Ca(2+).

Functionally, not known; probably binds four calcium ions. The protein is Calcium-binding protein 2 (cbp2) of Dictyostelium discoideum (Social amoeba).